A 741-amino-acid polypeptide reads, in one-letter code: Catalase-peroxidase (741 aa).

A signal peptide spans 1–23 (MLKKIVTALGMSGMLLASSNAIA). The tryptophyl-tyrosyl-methioninium (Trp-Tyr) (with M-249) cross-link spans 102 to 223 (WHDAGTYRIY…YAATQMGLIY (122 aa)). Catalysis depends on His-103, which acts as the Proton acceptor. A cross-link (tryptophyl-tyrosyl-methioninium (Tyr-Met) (with W-102)) is located at residues 223-249 (YVNPEGPDGKPDIKGAASEIRQAFRAM). Position 264 (His-264) interacts with heme b.

Belongs to the peroxidase family. Peroxidase/catalase subfamily. As to quaternary structure, homodimer or homotetramer. Requires heme b as cofactor. Formation of the three residue Trp-Tyr-Met cross-link is important for the catalase, but not the peroxidase activity of the enzyme.

It catalyses the reaction H2O2 + AH2 = A + 2 H2O. The catalysed reaction is 2 H2O2 = O2 + 2 H2O. Functionally, bifunctional enzyme with both catalase and broad-spectrum peroxidase activity. The polypeptide is Catalase-peroxidase (Francisella tularensis subsp. tularensis (strain WY96-3418)).